A 128-amino-acid chain; its full sequence is Large ribosomal subunit protein bL19 (128 aa).

This sequence belongs to the bacterial ribosomal protein bL19 family.

Its function is as follows. This protein is located at the 30S-50S ribosomal subunit interface and may play a role in the structure and function of the aminoacyl-tRNA binding site. In Mesoplasma florum (strain ATCC 33453 / NBRC 100688 / NCTC 11704 / L1) (Acholeplasma florum), this protein is Large ribosomal subunit protein bL19.